We begin with the raw amino-acid sequence, 336 residues long: Acyl-CoA-binding domain-containing protein 4 (336 aa).

A helical; Signal-anchor membrane pass occupies residues A12–F32. The tract at residues T40–T88 is disordered. The span at S42 to A54 shows a compositional bias: low complexity. Acidic residues predominate over residues S78–T88. An ACB domain is found at L90–M178. Residues Y120–K124, K142, K146, and Y165 each bind an acyl-CoA. N175 carries an N-linked (GlcNAc...) asparagine glycan. Residues G179–P202 form a disordered region. A glycan (N-linked (GlcNAc...) asparagine) is linked at N216. 2 ANK repeats span residues E251–A280 and E284–I313.

It belongs to the ACBP family. As to expression, highly expressed in leaves. Expressed at low levels in roots and seeds.

Its subcellular location is the endoplasmic reticulum membrane. Binds medium- and long-chain acyl-CoA esters with high affinity. Can interact in vitro with palmitoyl-CoA, linoleoyl-CoA and linolenoyl-CoA. Binds phosphatidic acid (PA) and phosphatidylcholine (PC) in vitro. May play a role in the biosynthesis of phospholipids. In Oryza sativa subsp. japonica (Rice), this protein is Acyl-CoA-binding domain-containing protein 4.